The sequence spans 1954 residues: Protein GREB1 (1954 aa).

Disordered regions lie at residues 48–83 (LSSL…QLPP), 238–342 (LAAF…AKHE), and 1083–1235 (KGPK…GSSS). Over residues 59–68 (NEEEEEDGEG) the composition is skewed to acidic residues. Residues 292-303 (SSLSALPRPSAL) are compositionally biased toward low complexity. Composition is skewed to basic and acidic residues over residues 1083-1099 (KGPK…KLSS) and 1122-1133 (GPVKRERSHSHD). Positions 1134 to 1146 (SASSSLSSRASGS) are enriched in low complexity. Residues 1187–1196 (RVSQGSTVIS) are compositionally biased toward polar residues. Residues 1224–1235 (SSQLSSSSGSSS) show a composition bias toward low complexity. The chain crosses the membrane as a helical span at residues 1873–1893 (DMVFSGLLLYLCDSFVGASFL).

It belongs to the GREB1 family.

It localises to the membrane. Functionally, may play a role in estrogen-stimulated cell proliferation. The sequence is that of Protein GREB1 (Greb1) from Mus musculus (Mouse).